The primary structure comprises 968 residues: MPFTLGQRWISDTESELGLGAVVAVDARTVTLLFPSTGENRLYARSDSPVTRVMFNPGDTITSHDGWQMQVEEVKEENGLLTYIGTRLDTEESGVALREVFLDSKLVFSKPQDRLFAGQIDRMDRFALRYRARKYSSEQFRMPYSGLRGQRTSLIPHQLNIAHDVGRRHAPRVLLADEVGLGKTIEAGMILHQQLLSGAAERVLIIVPETLQHQWLVEMLRRFNLRFALFDDERYAEAQHDAYNPFDTEQLVICSLDFARRSKQRLEHLCEAEWDLLVVDEAHHLVWSEDAPSREYQAIEQLAEHVPGVLLLTATPEQLGMESHFARLRLLDPNRFHDFAQFVEEQKNYRPVADAVAMLLAGNKLSNDELNMLGEMIGEQDIEPLLQAANSDSEDAQSARQELVSMLMDRHGTSRVLFRNTRNGVKGFPKRELHTIKLPLPTQYQTAIKVSGIMGARKSAEDRARDMLYPERIYQEFEGDNATWWNFDPRVEWLMGYLTSHRSQKVLVICAKAATALQLEQVLREREGIRAAVFHEGMSIIERDRAAAWFAEEDTGAQVLLCSEIGSEGRNFQFASHMVMFDLPFNPDLLEQRIGRLDRIGQAHDIQIHVPYLEKTAQSVLVRWYHEGLDAFEHTCPTGRTIYDSVYNDLINYLASPDETEGFDDLIKNCREQHEALKAQLEQGRDRLLEIHSNGGEKAQALAESIEEQDDDTNLIAFAMNLFDIIGINQDDRGDNIIVLTPSDHMLVPDFPGLSEDGITITFDREVALAREDAQFITWEHPLIRNGLDLILSGDTGSSTISLLKNKALPVGTLLVELIYVVEAQAPKQLQLNRFLPPTPVRMLLDKNGNNLAAQVEFETFNRQLNAVNRYTGSKLVNAVQQDVHAILQLGEAQIEKSARALIDAARNEADEKLSAELSRLEALRAVNPNIRDDELTAIESNRQQVMESLDQAGWRLDALRLIVVTHQ.

The Helicase ATP-binding domain maps to 164–334; the sequence is DVGRRHAPRV…FARLRLLDPN (171 aa). Position 177–184 (177–184) interacts with ATP; sequence DEVGLGKT. The DEAH box signature appears at 280–283; sequence DEAH. One can recognise a Helicase C-terminal domain in the interval 490–662; sequence RVEWLMGYLT…YLASPDETEG (173 aa).

This sequence belongs to the SNF2/RAD54 helicase family. RapA subfamily. As to quaternary structure, interacts with the RNAP. Has a higher affinity for the core RNAP than for the holoenzyme. Its ATPase activity is stimulated by binding to RNAP.

In terms of biological role, transcription regulator that activates transcription by stimulating RNA polymerase (RNAP) recycling in case of stress conditions such as supercoiled DNA or high salt concentrations. Probably acts by releasing the RNAP, when it is trapped or immobilized on tightly supercoiled DNA. Does not activate transcription on linear DNA. Probably not involved in DNA repair. The protein is RNA polymerase-associated protein RapA of Escherichia coli O81 (strain ED1a).